The sequence spans 62 residues: Photosystem II reaction center protein Z (62 aa).

Transmembrane regions (helical) follow at residues Leu-8–Ala-28 and Tyr-41–Val-61.

Belongs to the PsbZ family. PSII is composed of 1 copy each of membrane proteins PsbA, PsbB, PsbC, PsbD, PsbE, PsbF, PsbH, PsbI, PsbJ, PsbK, PsbL, PsbM, PsbT, PsbX, PsbY, PsbZ, Psb30/Ycf12, at least 3 peripheral proteins of the oxygen-evolving complex and a large number of cofactors. It forms dimeric complexes.

It is found in the plastid. Its subcellular location is the chloroplast thylakoid membrane. May control the interaction of photosystem II (PSII) cores with the light-harvesting antenna, regulates electron flow through the 2 photosystem reaction centers. PSII is a light-driven water plastoquinone oxidoreductase, using light energy to abstract electrons from H(2)O, generating a proton gradient subsequently used for ATP formation. This is Photosystem II reaction center protein Z from Pyropia yezoensis (Susabi-nori).